A 683-amino-acid chain; its full sequence is THO complex subunit 5 (683 aa).

The tract at residues 1–42 is disordered; that stretch reads MSSESSKKRKPKVIRSDGAPAEGKRNRSDTEQEGKYYSEEAE. Position 2 is an N-acetylserine (serine 2). The interval 2 to 144 is interaction with CSF1R; that stretch reads SSESSKKRKP…YEVMHLQKEI (143 aa). Residues 2 to 199 form an interaction with THOC7 region; sequence SSESSKKRKP…RLDWELEQRK (198 aa). 2 positions are modified to phosphoserine: serine 5 and serine 6. The Nuclear localization signal motif lies at 7–10; that stretch reads KKRK. Residues 22 to 42 are compositionally biased toward basic and acidic residues; it reads EGKRNRSDTEQEGKYYSEEAE. A coiled-coil region spans residues 81–247; that stretch reads AIEIEERRIQ…QASLPVQEYL (167 aa). A Glycyl lysine isopeptide (Lys-Gly) (interchain with G-Cter in SUMO2) cross-link involves residue lysine 153. Position 225 is a phosphotyrosine; by SRC (tyrosine 225). Residues 247 to 683 form a tandem RWD domains region; the sequence is LFMPFDQAHK…NHPQGFFSHR (437 aa). The tract at residues 301–336 is disordered; that stretch reads FKPPEDSQDDESDSDAEEEQTTKRRRPTLGVQLDDK. Acidic residues predominate over residues 306–319; the sequence is DSQDDESDSDAEEE. Phosphoserine is present on residues serine 307, serine 312, and serine 314. Threonine 328 carries the post-translational modification Phosphothreonine.

It belongs to the THOC5 family. In terms of assembly, component of the THO subcomplex, which is composed of THOC1, THOC2, THOC3, THOC5, THOC6 and THOC7. The THO subcomplex interacts with DDX39B to form the THO-DDX39B complex which multimerizes into a 28-subunit tetrameric assembly. Component of the transcription/export (TREX) complex at least composed of ALYREF/THOC4, DDX39B, SARNP/CIP29, CHTOP and the THO subcomplex; in the complex interacts with THOC1, THOC2, THOC5, THOC6 and THOC7; forms a coiled-coil dimer with THOC7; together with THOC6 and THOC7, plays a key structural role in oligomerization of the THO-DDX39B complex. TREX seems to have a dynamic structure involving ATP-dependent remodeling. Interacts with phosphorylated CSF1R. Interacts (via N-terminus) with the NTF2 domain of NXF1. Forms a complex with CEBPB. Interacts with CPSF6; indicative for an association with the cleavage factor Im (CFIm) complex. Interacts with LUZP4. Interacts with NCBP3. Phosphorylated on tyrosine upon binding to activated CSF1R; which causes a dissociation of the two proteins. Phosphorylation on Ser-5 and/or Ser-6 is required for nuclear export. Phosphorylated on Thr-328 in insulin-stimulated adipocytes. Phosphorylation at Tyr-225 modulates mRNA binding. In terms of tissue distribution, ubiquitously expressed.

It is found in the nucleus. Its subcellular location is the cytoplasm. In terms of biological role, component of the THO subcomplex of the TREX complex which is thought to couple mRNA transcription, processing and nuclear export, and which specifically associates with spliced mRNA and not with unspliced pre-mRNA. Plays a key structural role in the oligomerization of the THO-DDX39B complex. TREX is recruited to spliced mRNAs by a transcription-independent mechanism, binds to mRNA upstream of the exon-junction complex (EJC) and is recruited in a splicing- and cap-dependent manner to a region near the 5' end of the mRNA where it functions in mRNA export to the cytoplasm via the TAP/NXF1 pathway. THOC5 in conjunction with ALYREF/THOC4 functions in NXF1-NXT1 mediated nuclear export of HSP70 mRNA; both proteins enhance the RNA binding activity of NXF1 and are required for NXF1 localization to the nuclear rim. Involved in transcription elongation and genome stability. Involved in alternative polyadenylation site choice by recruiting CPSF6 to 5' region of target genes; probably mediates association of the TREX and CFIm complexes. Its function is as follows. Regulates the expression of myeloid transcription factors CEBPA, CEBPB and GAB2 by enhancing the levels of phosphatidylinositol 3,4,5-trisphosphate. May be involved in the differentiation of granulocytes and adipocytes. Essential for hematopoietic primitive cell survival and plays an integral role in monocytic development. Functionally, (Microbial infection) The TREX complex is essential for the export of Kaposi's sarcoma-associated herpesvirus (KSHV) intronless mRNAs and infectious virus production. The polypeptide is THO complex subunit 5 (THOC5) (Homo sapiens (Human)).